We begin with the raw amino-acid sequence, 59 residues long: Large ribosomal subunit protein uL30 (59 aa).

This sequence belongs to the universal ribosomal protein uL30 family. In terms of assembly, part of the 50S ribosomal subunit.

In Leptospira biflexa serovar Patoc (strain Patoc 1 / ATCC 23582 / Paris), this protein is Large ribosomal subunit protein uL30.